The primary structure comprises 404 residues: O-antigen ligase (404 aa).

11 helical membrane passes run 16-32 (IWNK…YFLD), 39-55 (HLII…QVSR), 67-84 (SVFY…YSIL), 96-115 (FENT…PVLL), 127-147 (VLFS…ILYI), 168-183 (SMVF…WLFR), 189-221 (LVFL…GVLW), 228-246 (WKLI…ALVI), 324-343 (ILYI…VYLY), 363-379 (YNAH…FYIV), and 385-401 (QVDI…LLAL).

Belongs to the O-antigen ligase family.

It localises to the cell inner membrane. It carries out the reaction a lipid-linked O antigen + a lipid A-core oligosaccharide = a lipopolysaccharide + a polyisoprenyl diphosphate.. It participates in bacterial outer membrane biogenesis; lipopolysaccharide biosynthesis. Functionally, transferase involved in the biosynthesis of the lipopolysaccharide (LPS). Catalyzes the transfer of a polymerized O-antigen molecule from its polyprenyl diphosphate membrane anchor to a terminal sugar of the lipid A-core oligosaccharide, finalizing the biosynthesis of the lipopolysaccharide. May also be involved in a feedback mechanism to regulate O-unit synthesis, based on the availability of O units on the periplasmic face of the membrane. This chain is O-antigen ligase, found in Salmonella typhimurium (strain LT2 / SGSC1412 / ATCC 700720).